Here is a 344-residue protein sequence, read N- to C-terminus: Zinc transporter 9 (344 aa).

The chain crosses the membrane as a helical span at residues 1-21; that stretch reads MASILISGAAGVSIPLVGTLL. The Cytoplasmic portion of the chain corresponds to 22-30; sequence PLNGGLMRG. The helical transmembrane segment at 31 to 51 threads the bilayer; it reads AKAFAAGVILATGFVHMLSGG. Residues 52–72 lie on the Extracellular side of the membrane; that stretch reads SKALSDPCLPEFPWKMFPFPE. The helical transmembrane segment at 73–93 threads the bilayer; that stretch reads FFAMVAALLTLLADFMITGYY. Over 94–188 the chain is Cytoplasmic; sequence ERKQEKMMNQ…DVGLDSGVRH (95 aa). A helical transmembrane segment spans residues 189-209; that stretch reads VVVSQILEMGIVSHSIIIGIS. Topologically, residues 210–221 are extracellular; sequence LGVSHSPCTIRP. A helical membrane pass occupies residues 222 to 242; that stretch reads LLLALSFHQFFEGFALGGCVA. Residues 243 to 251 are Cytoplasmic-facing; it reads EARLTPRGS. A helical transmembrane segment spans residues 252–272; the sequence is AMMAFFFAITTPIGVAVGTAI. Residues 273–291 lie on the Extracellular side of the membrane; sequence ASSYNSYSVAALVAEGVLD. The chain crosses the membrane as a helical span at residues 292–312; sequence SLSAGILVYMALVDLIAADFL. Over 313-323 the chain is Cytoplasmic; sequence SKKMSVDFRVQ. Residues 324–344 form a helical membrane-spanning segment; it reads VVSYCFLFLGAGMMSALAIWA.

Belongs to the ZIP transporter (TC 2.A.5) family.

Its subcellular location is the cell membrane. Its function is as follows. Zinc transporter involved in zinc uptake in roots. Targeted by BZIP19 transcription factor in response to zinc-deficient conditions. This chain is Zinc transporter 9 (ZIP9), found in Arabidopsis thaliana (Mouse-ear cress).